Consider the following 116-residue polypeptide: Cystatin (116 aa).

The Secondary area of contact signature appears at 53–57 (QLVSG). Cystine bridges form between C71/C81 and C95/C115. S80 carries the phosphoserine modification.

The protein belongs to the cystatin family.

The protein localises to the secreted. This protein binds tightly to and inhibits papain and cathepsin B. This is Cystatin from Coturnix japonica (Japanese quail).